A 338-amino-acid polypeptide reads, in one-letter code: Fructose-1,6-bisphosphatase class 1 (338 aa).

Residues E92, D114, L116, and D117 each contribute to the Mg(2+) site. Residues 117 to 120 (DGSS), N210, Y243, and K276 contribute to the substrate site. E282 lines the Mg(2+) pocket.

Belongs to the FBPase class 1 family. As to quaternary structure, homotetramer. Requires Mg(2+) as cofactor.

Its subcellular location is the cytoplasm. The enzyme catalyses beta-D-fructose 1,6-bisphosphate + H2O = beta-D-fructose 6-phosphate + phosphate. Its pathway is carbohydrate biosynthesis; gluconeogenesis. In Maridesulfovibrio salexigens (strain ATCC 14822 / DSM 2638 / NCIMB 8403 / VKM B-1763) (Desulfovibrio salexigens), this protein is Fructose-1,6-bisphosphatase class 1.